The sequence spans 121 residues: MNPKRCAACKYLRRRCPKDCVFSPYFPPNDPQKFACVHRIYGAGNVSKMLQQLPDQTRAEAVESLCFEAKCRVDDPVYGCVGIIHLLKTQIQKTQNELAKTQAEIAVAQTKLSQTQNSDFM.

The LOB domain maps to 4-105; that stretch reads KRCAACKYLR…NELAKTQAEI (102 aa).

This sequence belongs to the LOB domain-containing protein family.

This is LOB domain-containing protein 24 (LBD24) from Arabidopsis thaliana (Mouse-ear cress).